We begin with the raw amino-acid sequence, 472 residues long: Forkhead box protein H1 (472 aa).

Residues 36 to 56 are disordered; the sequence is SSKRSCHRSSNPLLELGGRLD. The segment at residues 97–193 is a DNA-binding region (fork-head); it reads KPPYSYLAMI…LKRQNTAVSR (97 aa). Disordered regions lie at residues 211 to 246 and 261 to 360; these read YSQP…RPKL and PASS…LPTS. The segment covering 219-239 has biased composition (pro residues); that stretch reads PLPPESSLPPVPTRQSPPPSE. Positions 294–310 are enriched in low complexity; it reads ASYNGSSSASSVSPASD. Residues 339–465 are SMAD-interaction domain (SID); that stretch reads SCPPPNKSSK…PNQYALQNGP (127 aa). The short motif at 357-361 is the Fast/FoxH1 motif 1 (FM1) element; that stretch reads LPTSY. The Fast/FoxH1 motif 2 (FM2) motif lies at 367–373; it reads PNAVAPP. Positions 428–448 match the SMAD interaction motif (SIM) motif; the sequence is LDSMLQSVPPNKSVFDALGSN.

It is found in the nucleus. Its function is as follows. Transcriptional activator. Activates an activin response element (ARE). Recognizes and binds to the DNA sequence 5'-TGT[GT][GT]ATT-3'. Modulator of nodal signaling required for organizer formation. Also required for the development of dorsal axial structures and left-right symmetry. In Danio rerio (Zebrafish), this protein is Forkhead box protein H1 (foxh1).